Consider the following 395-residue polypeptide: Flap endonuclease 1 (395 aa).

Residues 1–108 form an N-domain region; the sequence is MGILGLSKLL…DELEMRRQKA (108 aa). Asp-34 contributes to the Mg(2+) binding site. Arg-74 provides a ligand contact to DNA. 5 residues coordinate Mg(2+): Asp-90, Glu-162, Glu-164, Asp-183, and Asp-185. Residues 126 to 257 form an I-domain region; it reads MMEKMSKRTV…QKAWEGIQRY (132 aa). Residue Glu-162 participates in DNA binding. Residues Gly-235 and Asp-237 each coordinate DNA. Position 237 (Asp-237) interacts with Mg(2+). The interval 340–348 is interaction with PCNA; the sequence is TQGRLDSFF.

Belongs to the XPG/RAD2 endonuclease family. FEN1 subfamily. Interacts with PCNA. Three molecules of FEN1 bind to one PCNA trimer with each molecule binding to one PCNA monomer. PCNA stimulates the nuclease activity without altering cleavage specificity. Mg(2+) serves as cofactor. Post-translationally, phosphorylated. Phosphorylation upon DNA damage induces relocalization to the nuclear plasma.

The protein resides in the nucleus. The protein localises to the nucleolus. Its subcellular location is the nucleoplasm. It is found in the mitochondrion. Structure-specific nuclease with 5'-flap endonuclease and 5'-3' exonuclease activities involved in DNA replication and repair. During DNA replication, cleaves the 5'-overhanging flap structure that is generated by displacement synthesis when DNA polymerase encounters the 5'-end of a downstream Okazaki fragment. It enters the flap from the 5'-end and then tracks to cleave the flap base, leaving a nick for ligation. Also involved in the long patch base excision repair (LP-BER) pathway, by cleaving within the apurinic/apyrimidinic (AP) site-terminated flap. Acts as a genome stabilization factor that prevents flaps from equilibrating into structures that lead to duplications and deletions. Also possesses 5'-3' exonuclease activity on nicked or gapped double-stranded DNA, and exhibits RNase H activity. Also involved in replication and repair of rDNA and in repairing mitochondrial DNA. The polypeptide is Flap endonuclease 1 (Leishmania infantum).